A 337-amino-acid chain; its full sequence is Ketol-acid reductoisomerase (NADP(+)) (337 aa).

The KARI N-terminal Rossmann domain maps to 3 to 183 (VEMFYDADAD…GGARAGVIKT (181 aa)). Residues 26–29 (YGSQ), lysine 49, serine 52, serine 54, and 84–87 (DTAQ) contribute to the NADP(+) site. Residue histidine 109 is part of the active site. Glycine 135 is an NADP(+) binding site. Positions 184–329 (TFKEETETDL…KKLRDLMSWV (146 aa)) constitute a KARI C-terminal knotted domain. 4 residues coordinate Mg(2+): aspartate 192, glutamate 196, glutamate 228, and glutamate 232. Serine 253 lines the substrate pocket.

Belongs to the ketol-acid reductoisomerase family. It depends on Mg(2+) as a cofactor.

It carries out the reaction (2R)-2,3-dihydroxy-3-methylbutanoate + NADP(+) = (2S)-2-acetolactate + NADPH + H(+). The enzyme catalyses (2R,3R)-2,3-dihydroxy-3-methylpentanoate + NADP(+) = (S)-2-ethyl-2-hydroxy-3-oxobutanoate + NADPH + H(+). It participates in amino-acid biosynthesis; L-isoleucine biosynthesis; L-isoleucine from 2-oxobutanoate: step 2/4. The protein operates within amino-acid biosynthesis; L-valine biosynthesis; L-valine from pyruvate: step 2/4. Functionally, involved in the biosynthesis of branched-chain amino acids (BCAA). Catalyzes an alkyl-migration followed by a ketol-acid reduction of (S)-2-acetolactate (S2AL) to yield (R)-2,3-dihydroxy-isovalerate. In the isomerase reaction, S2AL is rearranged via a Mg-dependent methyl migration to produce 3-hydroxy-3-methyl-2-ketobutyrate (HMKB). In the reductase reaction, this 2-ketoacid undergoes a metal-dependent reduction by NADPH to yield (R)-2,3-dihydroxy-isovalerate. The sequence is that of Ketol-acid reductoisomerase (NADP(+)) from Mycolicibacterium vanbaalenii (strain DSM 7251 / JCM 13017 / BCRC 16820 / KCTC 9966 / NRRL B-24157 / PYR-1) (Mycobacterium vanbaalenii).